The chain runs to 33 residues: Cyanophlyctin-beta (33 aa).

A disulfide bridge links Cys-27 with Cys-33.

Expressed by the skin glands.

It is found in the secreted. Its function is as follows. Antimicrobial peptide active against E.coli (MIC=5 uM), K.pneumoniae (MIC=10 uM), B.cereus (MIC=7 uM) and S.aureus (MIC=12 uM). Has very little hemolytic activity. The protein is Cyanophlyctin-beta of Euphlyctis cyanophlyctis (Skittering frog).